The chain runs to 184 residues: Class II hydrophobin 6 (184 aa).

Residues Met-1–Ala-16 form the signal peptide. 4 disulfides stabilise this stretch: Cys-122-Cys-169, Cys-130-Cys-160, Cys-131-Cys-143, and Cys-170-Cys-181.

This sequence belongs to the cerato-ulmin hydrophobin family. As to quaternary structure, homotetramer. Further self-assembles to form highly ordered films at water-air interfaces through intermolecular interactions. In terms of tissue distribution, expressed in the mycellium.

The protein resides in the secreted. Functionally, aerial growth, conidiation, and dispersal of filamentous fungi in the environment rely upon a capability of their secreting small amphipathic proteins called hydrophobins (HPBs) with low sequence identity. Class I can self-assemble into an outermost layer of rodlet bundles on aerial cell surfaces, conferring cellular hydrophobicity that supports fungal growth, development and dispersal; whereas Class II form highly ordered films at water-air interfaces through intermolecular interactions but contribute nothing to the rodlet structure. Hcf-6 is a class II hydrophobin that is involved in adhesion and in tomato plants infection. Is secreted to form a coat both around and beneath the fungus. The protein is Class II hydrophobin 6 of Passalora fulva (Tomato leaf mold).